The chain runs to 434 residues: [Pyruvate dehydrogenase (acetyl-transferring)] kinase isozyme 1, mitochondrial (434 aa).

The N-terminal 26 residues, 1–26 (MRLARLLRGGTSVRPLCAVPCASRSL), are a transit peptide targeting the mitochondrion. Tyr-136 bears the Phosphotyrosine; by FGFR1 mark. A Histidine kinase domain is found at 161–391 (TEYKESFGVD…DAVIYIKALS (231 aa)). Phosphotyrosine; by FGFR1, ABL1, FLT3 and JAK2 is present on Tyr-241. Residue Tyr-242 is modified to Phosphotyrosine; by FGFR1. Residues 277–284 (ELFKNAMR), Asp-316, 335–336 (ST), and 352–357 (GFGYGL) contribute to the ATP site. Thr-336 is subject to Phosphothreonine. At Lys-403 the chain carries N6-succinyllysine.

This sequence belongs to the PDK/BCKDK protein kinase family. In terms of assembly, homodimer, and heterodimer with PDK2. Interacts with the pyruvate dehydrogenase complex subunit DLAT, and is part of the multimeric pyruvate dehydrogenase complex that contains multiple copies of pyruvate dehydrogenase (E1), dihydrolipoamide acetyltransferase (DLAT, E2) and lipoamide dehydrogenase (DLD, E3). Interacts with phosphoglycerate kinase PGK1; the interaction is direct, occurs under hypoxic conditions and leads to PDK1-mediated inhibition of pyruvate dehydrogenase complex activity. In terms of processing, phosphorylated by constitutively activated ABL1, FGFR1, FLT3 and JAK2 (in vitro), and this may also occur in cancer cells that express constitutively activated ABL1, FGFR1, FLT3 and JAK2. Phosphorylation at Tyr-241 and Tyr-242 strongly increases kinase activity, while phosphorylation at Tyr-136 has a lesser effect. Phosphorylated under hypoxic conditions at Thr-336 by phosphoglycerate kinase PGK1 which has an activating effect. As to expression, detected in pancreas islets (at protein level). Expressed predominantly in the heart.

The protein resides in the mitochondrion matrix. The catalysed reaction is L-seryl-[pyruvate dehydrogenase E1 alpha subunit] + ATP = O-phospho-L-seryl-[pyruvate dehydrogenase E1 alpha subunit] + ADP + H(+). Its activity is regulated as follows. Activated by binding to the pyruvate dehydrogenase complex subunit DLAT. Strongly activated by NADH plus acetyl-coenzyme A. Inhibited by dichloroacetate. In terms of biological role, kinase that plays a key role in regulation of glucose and fatty acid metabolism and homeostasis via phosphorylation of the pyruvate dehydrogenase subunits PDHA1 and PDHA2. This inhibits pyruvate dehydrogenase activity, and thereby regulates metabolite flux through the tricarboxylic acid cycle, down-regulates aerobic respiration and inhibits the formation of acetyl-coenzyme A from pyruvate. Plays an important role in cellular responses to hypoxia and is important for cell proliferation under hypoxia. The protein is [Pyruvate dehydrogenase (acetyl-transferring)] kinase isozyme 1, mitochondrial (Pdk1) of Rattus norvegicus (Rat).